The chain runs to 94 residues: Co-chaperonin GroES (94 aa).

Belongs to the GroES chaperonin family. Heptamer of 7 subunits arranged in a ring. Interacts with the chaperonin GroEL.

Its subcellular location is the cytoplasm. Together with the chaperonin GroEL, plays an essential role in assisting protein folding. The GroEL-GroES system forms a nano-cage that allows encapsulation of the non-native substrate proteins and provides a physical environment optimized to promote and accelerate protein folding. GroES binds to the apical surface of the GroEL ring, thereby capping the opening of the GroEL channel. In Bacillus sp. (strain PS3), this protein is Co-chaperonin GroES.